A 463-amino-acid polypeptide reads, in one-letter code: Cytoplasmic tRNA 2-thiolation protein 2 (463 aa).

This sequence belongs to the CTU2/NCS2 family.

Its subcellular location is the cytoplasm. It participates in tRNA modification; 5-methoxycarbonylmethyl-2-thiouridine-tRNA biosynthesis. Functionally, plays a central role in 2-thiolation of mcm(5)S(2)U at tRNA wobble positions of tRNA(Lys), tRNA(Glu) and tRNA(Gln). May act by forming a heterodimer with NCS6 that ligates sulfur from thiocarboxylated URM1 onto the uridine of tRNAs at wobble position. Prior mcm(5) tRNA modification by the elongator complex is required for 2-thiolation. May also be involved in protein urmylation. The polypeptide is Cytoplasmic tRNA 2-thiolation protein 2 (Kluyveromyces lactis (strain ATCC 8585 / CBS 2359 / DSM 70799 / NBRC 1267 / NRRL Y-1140 / WM37) (Yeast)).